Reading from the N-terminus, the 296-residue chain is Glycine--tRNA ligase alpha subunit (296 aa).

Belongs to the class-II aminoacyl-tRNA synthetase family. Tetramer of two alpha and two beta subunits.

The protein resides in the cytoplasm. It catalyses the reaction tRNA(Gly) + glycine + ATP = glycyl-tRNA(Gly) + AMP + diphosphate. This chain is Glycine--tRNA ligase alpha subunit, found in Maricaulis maris (strain MCS10) (Caulobacter maris).